Reading from the N-terminus, the 177-residue chain is Small ribosomal subunit protein eS10z (177 aa).

Residues 90-177 (TLKKSAKPGG…AAAPSGSGFP (88 aa)) are disordered. Over residues 108–140 (DRQRGPPRSDGDRPRFGDRDGYRGGPRGGDEKG) the composition is skewed to basic and acidic residues. The span at 141 to 150 (GAPADFQPSF) shows a compositional bias: low complexity. The segment covering 151–165 (QGGGGRPGFGRGAGG) has biased composition (gly residues). A compositionally biased stretch (low complexity) spans 166–177 (YSAAAPSGSGFP).

It belongs to the eukaryotic ribosomal protein eS10 family.

Its subcellular location is the cytoplasm. This Arabidopsis thaliana (Mouse-ear cress) protein is Small ribosomal subunit protein eS10z (RPS10A).